Reading from the N-terminus, the 808-residue chain is Leucine-rich repeat-containing protein 41 (808 aa).

Residues 45–54 (ALFELCGRAV) are interaction with Elongin BC complex. Phosphoserine occurs at positions 155, 276, and 326. Disordered stretches follow at residues 269-289 (ASRG…SRRP) and 304-404 (TRRK…GSGA). Thr327 carries the phosphothreonine modification. Residues 357–379 (PSSAPTAASSSTSSKRAPASSVS) are compositionally biased toward low complexity. At Ser369 the chain carries Phosphoserine. The segment covering 383 to 397 (PLKRFKRATGKKGPR) has biased composition (basic residues). 7 LRR repeats span residues 483-503 (WVSL…IFRL), 514-526 (AGCR…LSDL), 527-551 (FSPL…VLSI), 609-631 (SGSL…FGLV), 632-655 (LQTL…LADC), 697-724 (NSTL…VFSE), and 727-748 (SSSL…LLEF).

As to quaternary structure, part of an E3 ubiquitin-protein ligase complex with Elongin BC (ELOB and ELOC), RBX1 and CUL5. Component of a probable ECS(LRRC41) complex which contains CUL5, RNF7/RBX2, Elongin BC and LRRC41. Interacts with CUL5, RNF7, ELOB and ELOC.

It functions in the pathway protein modification; protein ubiquitination. Functionally, probable substrate recognition component of an ECS (Elongin BC-CUL2/5-SOCS-box protein) E3 ubiquitin ligase complex which mediates the ubiquitination and subsequent proteasomal degradation of target proteins. This Rattus norvegicus (Rat) protein is Leucine-rich repeat-containing protein 41 (Lrrc41).